The following is a 380-amino-acid chain: Cytochrome b (380 aa).

4 helical membrane passes run 34–54 (FGSL…LLAM), 78–99 (WLIR…YMHI), 114–134 (WNTG…GYVL), and 179–199 (FFAL…IHLT). The heme b site is built by His-84 and His-98. 2 residues coordinate heme b: His-183 and His-197. His-202 is an a ubiquinone binding site. The next 4 helical transmembrane spans lie at 227-247 (LKDI…ALFS), 289-309 (LGGV…PLLH), 321-341 (LSQL…WIGS), and 348-368 (FIII…ILFP).

It belongs to the cytochrome b family. The cytochrome bc1 complex contains 11 subunits: 3 respiratory subunits (MT-CYB, CYC1 and UQCRFS1), 2 core proteins (UQCRC1 and UQCRC2) and 6 low-molecular weight proteins (UQCRH/QCR6, UQCRB/QCR7, UQCRQ/QCR8, UQCR10/QCR9, UQCR11/QCR10 and a cleavage product of UQCRFS1). This cytochrome bc1 complex then forms a dimer. It depends on heme b as a cofactor.

The protein localises to the mitochondrion inner membrane. Component of the ubiquinol-cytochrome c reductase complex (complex III or cytochrome b-c1 complex) that is part of the mitochondrial respiratory chain. The b-c1 complex mediates electron transfer from ubiquinol to cytochrome c. Contributes to the generation of a proton gradient across the mitochondrial membrane that is then used for ATP synthesis. In Hydrobates pelagicus (European storm-petrel), this protein is Cytochrome b (MT-CYB).